The chain runs to 327 residues: Ribose-phosphate pyrophosphokinase (327 aa).

ATP is bound by residues 40–42 (DGE) and 99–100 (RQ). Mg(2+) contacts are provided by histidine 134 and aspartate 173. Lysine 196 is an active-site residue. D-ribose 5-phosphate-binding positions include arginine 198, aspartate 222, and 226–230 (DTANT).

Belongs to the ribose-phosphate pyrophosphokinase family. Class I subfamily. As to quaternary structure, homohexamer. It depends on Mg(2+) as a cofactor.

It localises to the cytoplasm. The catalysed reaction is D-ribose 5-phosphate + ATP = 5-phospho-alpha-D-ribose 1-diphosphate + AMP + H(+). The protein operates within metabolic intermediate biosynthesis; 5-phospho-alpha-D-ribose 1-diphosphate biosynthesis; 5-phospho-alpha-D-ribose 1-diphosphate from D-ribose 5-phosphate (route I): step 1/1. Its function is as follows. Involved in the biosynthesis of the central metabolite phospho-alpha-D-ribosyl-1-pyrophosphate (PRPP) via the transfer of pyrophosphoryl group from ATP to 1-hydroxyl of ribose-5-phosphate (Rib-5-P). In Chromobacterium violaceum (strain ATCC 12472 / DSM 30191 / JCM 1249 / CCUG 213 / NBRC 12614 / NCIMB 9131 / NCTC 9757 / MK), this protein is Ribose-phosphate pyrophosphokinase.